Here is a 153-residue protein sequence, read N- to C-terminus: Putative pre-16S rRNA nuclease (153 aa).

It belongs to the YqgF nuclease family.

It is found in the cytoplasm. In terms of biological role, could be a nuclease involved in processing of the 5'-end of pre-16S rRNA. This is Putative pre-16S rRNA nuclease from Prochlorococcus marinus (strain SARG / CCMP1375 / SS120).